Consider the following 360-residue polypeptide: MALFSVRKARECWRFIRALHKGPAATLAPQKESGERVFSGIQPTGILHLGNYLGAIESWVNLQEEYDTVIYSIVDLHSITVPQDPTVLQQSILDMTAVLLACGINPEKSILFQQSKVSEHTQLSWILTCMVRLPRLQHLHQWKAKAAKQKHDGTVGLLTYPVLQAADILCYKSTHVPVGEDQVQHMELVQDLARSFNQKYGEFFPLPKSILTSMKKVKSLRDPSSKMSKSDPDKLATVRITDSPEEIVQKFRKAVTDFTSEVTYEPDSRAGVSNMVAIHAAVSGLSVEEVVRSSAGLDTARYKLLVADAVIEKFAPIRKEIEKLKMDKDHLRKVLLVGSAKAKELASPVFEEVKKLVGIL.

The transit peptide at 1 to 18 (MALFSVRKARECWRFIRA) directs the protein to the mitochondrion. ATP contacts are provided by residues Gln-42 and 48–51 (HLGN). Residue Asp-167 coordinates L-tryptophan. ATP-binding positions include 179–181 (GED), Val-217, and 226–230 (KMSKS).

The protein belongs to the class-I aminoacyl-tRNA synthetase family.

It localises to the mitochondrion matrix. It is found in the mitochondrion. It carries out the reaction tRNA(Trp) + L-tryptophan + ATP = L-tryptophyl-tRNA(Trp) + AMP + diphosphate + H(+). Its function is as follows. Catalyzes the attachment of tryptophan to tRNA(Trp) in a two-step reaction: tryptophan is first activated by ATP to form Trp-AMP and then transferred to the acceptor end of tRNA(Trp). The chain is Tryptophan--tRNA ligase, mitochondrial (Wars2) from Mus musculus (Mouse).